A 459-amino-acid chain; its full sequence is Phosphomethylpyrimidine synthase (459 aa).

Substrate-binding positions include asparagine 80, methionine 109, tyrosine 139, histidine 175, 195–197 (SRG), 236–239 (DSLR), and glutamate 275. Histidine 279 is a Zn(2+) binding site. Substrate is bound at residue tyrosine 302. Zn(2+) is bound at residue histidine 343. 3 residues coordinate [4Fe-4S] cluster: cysteine 423, cysteine 426, and cysteine 431.

It belongs to the ThiC family. It depends on [4Fe-4S] cluster as a cofactor.

It carries out the reaction 5-amino-1-(5-phospho-beta-D-ribosyl)imidazole + S-adenosyl-L-methionine = 4-amino-2-methyl-5-(phosphooxymethyl)pyrimidine + CO + 5'-deoxyadenosine + formate + L-methionine + 3 H(+). The protein operates within cofactor biosynthesis; thiamine diphosphate biosynthesis. In terms of biological role, catalyzes the synthesis of the hydroxymethylpyrimidine phosphate (HMP-P) moiety of thiamine from aminoimidazole ribotide (AIR) in a radical S-adenosyl-L-methionine (SAM)-dependent reaction. In Prochlorococcus marinus (strain MIT 9303), this protein is Phosphomethylpyrimidine synthase.